Consider the following 211-residue polypeptide: Thymidylate kinase (211 aa).

10 to 17 contributes to the ATP binding site; that stretch reads GPDGAGKT.

Belongs to the thymidylate kinase family.

It catalyses the reaction dTMP + ATP = dTDP + ADP. In terms of biological role, phosphorylation of dTMP to form dTDP in both de novo and salvage pathways of dTTP synthesis. The sequence is that of Thymidylate kinase (tmk) from Lactococcus lactis subsp. lactis (strain IL1403) (Streptococcus lactis).